A 583-amino-acid polypeptide reads, in one-letter code: Sphingomyelin phosphodiesterase A (583 aa).

The N-terminal stretch at 1–21 (MKSIPIILLVLIGLLLASVYS) is a signal peptide. Residues 51–133 (IQLSCDVCQI…GYFKICSATG (83 aa)) enclose the Saposin B-type domain. Cystine bridges form between Cys55/Cys129, Cys58/Cys123, and Cys86/Cys97. Residue Asn72 is glycosylated (N-linked (GlcNAc...) asparagine). Asn182 carries an N-linked (GlcNAc...) asparagine glycan. Positions 193 and 195 each coordinate Zn(2+). A disulfide bridge links Cys214 with Cys229. Zn(2+) contacts are provided by Asp258 and Asn298. Asn377 is a glycosylation site (N-linked (GlcNAc...) asparagine). Residues His401, His436, and His438 each contribute to the Zn(2+) site. N-linked (GlcNAc...) asparagine glycans are attached at residues Asn495, Asn500, Asn537, and Asn547. Cys567 and Cys580 are oxidised to a cystine.

This sequence belongs to the acid sphingomyelinase family. The cofactor is Zn(2+).

The protein localises to the secreted. In terms of biological role, converts sphingomyelin to ceramide. The sequence is that of Sphingomyelin phosphodiesterase A (sgmA) from Dictyostelium discoideum (Social amoeba).